Reading from the N-terminus, the 504-residue chain is Lysine--tRNA ligase (504 aa).

The short motif at 23-31 (PSGPIHIGN) is the 'HIGH' region element.

This sequence belongs to the class-I aminoacyl-tRNA synthetase family.

It is found in the cytoplasm. It catalyses the reaction tRNA(Lys) + L-lysine + ATP = L-lysyl-tRNA(Lys) + AMP + diphosphate. The chain is Lysine--tRNA ligase from Picrophilus torridus (strain ATCC 700027 / DSM 9790 / JCM 10055 / NBRC 100828 / KAW 2/3).